A 516-amino-acid polypeptide reads, in one-letter code: MEKLTFLSLLLHFVVFIASTIPSSSFLLNDRTFERSNLPSTRAEKLIRELNLFPQQDLNVIDVADLPLTAAEGPGIVERKFVFPNILADGGPTVDDLGHHAGYYKLPKSRGASMFYFFFESRNKKDAPVVIWLTGGPGCSSELAVFYENGPFKITSNMSLAWNEYGWDQVSNLLYVDQPVGTGFSYTTDKSDIRHDETGVSNDLYDFLQAFFAEHPKLAKNDFYITGESYAGHYIPAFASRVHKGNKANEGVHINLKGFAIGNGLTDPALQYPAYPDYALEMGLITQKEHDRLEKIVPLCELSIKLCGTDGTTSCLASYLVCNSLFSGVMSHAGGVNYYDIRKKCVGSLCYDFSNMEKFLNLQSVRKSLGVGDIDFVSCSTSVYQAMLVDWMRNLEVGIPTLLEDGISLLVYAGEYDLICNWLGNSRWVNAMEWSGKTNFGAAKEVPFIVDGKEAGLLKTYEQLSFLKVRDAGHMVPMDQPKAALKMLKRWMENSLIEDATVTVAAQGGEELVAQM.

Positions 1–22 are cleaved as a signal peptide; it reads MEKLTFLSLLLHFVVFIASTIP. Residues 23–82 constitute a propeptide that is removed on maturation; sequence SSSFLLNDRTFERSNLPSTRAEKLIRELNLFPQQDLNVIDVADLPLTAAEGPGIVERKFV. Disulfide bonds link Cys139/Cys379, Cys307/Cys322, and Cys345/Cys350. Residue Asn157 is glycosylated (N-linked (GlcNAc...) asparagine). Residue Ser229 is part of the active site. The active site involves Asp417. Cys420 serves as a coordination point for substrate. Residue His474 is part of the active site.

Belongs to the peptidase S10 family. In terms of tissue distribution, expressed in roots, senescent leaves and flowers.

Its subcellular location is the secreted. Functionally, probable carboxypeptidase. The sequence is that of Serine carboxypeptidase-like 49 (SCPL49) from Arabidopsis thaliana (Mouse-ear cress).